A 196-amino-acid polypeptide reads, in one-letter code: Proteasome subunit beta 2 (196 aa).

Positions 1-6 are cleaved as a propeptide — removed in mature form; by autocatalysis; it reads MEELPS. Catalysis depends on threonine 7, which acts as the Nucleophile.

This sequence belongs to the peptidase T1B family. In terms of assembly, the 20S proteasome core is composed of 14 alpha and 14 beta subunits that assemble into four stacked heptameric rings, resulting in a barrel-shaped structure. The two inner rings, each composed of seven catalytic beta subunits, are sandwiched by two outer rings, each composed of seven alpha subunits. The catalytic chamber with the active sites is on the inside of the barrel. Has a gated structure, the ends of the cylinder being occluded by the N-termini of the alpha-subunits. Is capped at one or both ends by the proteasome regulatory ATPase, PAN.

The protein resides in the cytoplasm. It carries out the reaction Cleavage of peptide bonds with very broad specificity.. With respect to regulation, the formation of the proteasomal ATPase PAN-20S proteasome complex, via the docking of the C-termini of PAN into the intersubunit pockets in the alpha-rings, triggers opening of the gate for substrate entry. Interconversion between the open-gate and close-gate conformations leads to a dynamic regulation of the 20S proteasome proteolysis activity. In terms of biological role, component of the proteasome core, a large protease complex with broad specificity involved in protein degradation. This is Proteasome subunit beta 2 from Metallosphaera sedula (strain ATCC 51363 / DSM 5348 / JCM 9185 / NBRC 15509 / TH2).